Here is a 292-residue protein sequence, read N- to C-terminus: Zinc metalloproteinase nas-3 (292 aa).

The first 16 residues, 1–16, serve as a signal peptide directing secretion; it reads MYRFIIFFSLLALTAS. The Peptidase M12A domain occupies 56-249; it reads RGIAIHPWQW…RNINTLYKCN (194 aa). Disulfide bonds link C103/C248 and C128/C158. Residue H169 coordinates Zn(2+). The active site involves E170. Zn(2+) contacts are provided by H173 and H179.

Zn(2+) is required as a cofactor.

Its subcellular location is the secreted. Its function is as follows. Metalloprotease. The sequence is that of Zinc metalloproteinase nas-3 (nas-3) from Caenorhabditis elegans.